Consider the following 402-residue polypeptide: Speedy protein E21 (402 aa).

The segment at 1–90 is disordered; that stretch reads MDRTETRFRK…EPEKELAPEP (90 aa). Residues 16–39 show a composition bias toward polar residues; the sequence is GKITTSRQLHPQNEQSPQRSTSGY. Residues 76 to 90 show a composition bias toward acidic residues; that stretch reads DESEEEPEKELAPEP.

The protein belongs to the Speedy/Ringo family.

This is Speedy protein E21 from Homo sapiens (Human).